We begin with the raw amino-acid sequence, 392 residues long: Protein-glutamate methylesterase/protein-glutamine glutaminase (392 aa).

The 118-residue stretch at 9-126 (TVLIVDDSPF…GADIQALARD (118 aa)) folds into the Response regulatory domain. A 4-aspartylphosphate modification is found at Asp60. Residues 148–194 (VSRISSASGSRPPWTAGAASENTNRLSSPGSTSSTLGSAKGRSLDSG) form a disordered region. Positions 173-185 (LSSPGSTSSTLGS) are enriched in low complexity. Residues 198–392 (PKYPVEIVAI…RHIVECVQRR (195 aa)) form the CheB-type methylesterase domain. Catalysis depends on residues Ser210, His237, and Asp334.

Belongs to the CheB family. Phosphorylated by CheA. Phosphorylation of the N-terminal regulatory domain activates the methylesterase activity.

The protein localises to the cytoplasm. The enzyme catalyses [protein]-L-glutamate 5-O-methyl ester + H2O = L-glutamyl-[protein] + methanol + H(+). It carries out the reaction L-glutaminyl-[protein] + H2O = L-glutamyl-[protein] + NH4(+). Involved in chemotaxis. Part of a chemotaxis signal transduction system that modulates chemotaxis in response to various stimuli. Catalyzes the demethylation of specific methylglutamate residues introduced into the chemoreceptors (methyl-accepting chemotaxis proteins or MCP) by CheR. Also mediates the irreversible deamidation of specific glutamine residues to glutamic acid. This chain is Protein-glutamate methylesterase/protein-glutamine glutaminase, found in Desulfitobacterium hafniense (strain Y51).